The chain runs to 242 residues: Probable proteasome subunit alpha type-7 (242 aa).

Belongs to the peptidase T1A family. In terms of assembly, the 26S proteasome consists of a 20S proteasome core and two 19S regulatory subunits. The 20S proteasome core is composed of 28 subunits that are arranged in four stacked rings, resulting in a barrel-shaped structure. The two end rings are each formed by seven alpha subunits, and the two central rings are each formed by seven beta subunits. The catalytic chamber with the active sites is on the inside of the barrel.

It is found in the cytoplasm. The protein localises to the nucleus. In terms of biological role, the proteasome degrades poly-ubiquitinated proteins in the cytoplasm and in the nucleus. It is essential for the regulated turnover of proteins and for the removal of misfolded proteins. The proteasome is a multicatalytic proteinase complex that is characterized by its ability to cleave peptides with Arg, Phe, Tyr, Leu, and Glu adjacent to the leaving group at neutral or slightly basic pH. It has an ATP-dependent proteolytic activity. The chain is Probable proteasome subunit alpha type-7 (PRE10) from Encephalitozoon cuniculi (strain GB-M1) (Microsporidian parasite).